We begin with the raw amino-acid sequence, 392 residues long: Tryptophan synthase beta chain (392 aa).

Position 84 is an N6-(pyridoxal phosphate)lysine (Lys-84).

Belongs to the TrpB family. In terms of assembly, tetramer of two alpha and two beta chains. The cofactor is pyridoxal 5'-phosphate.

It carries out the reaction (1S,2R)-1-C-(indol-3-yl)glycerol 3-phosphate + L-serine = D-glyceraldehyde 3-phosphate + L-tryptophan + H2O. It functions in the pathway amino-acid biosynthesis; L-tryptophan biosynthesis; L-tryptophan from chorismate: step 5/5. The beta subunit is responsible for the synthesis of L-tryptophan from indole and L-serine. The chain is Tryptophan synthase beta chain from Campylobacter jejuni subsp. jejuni serotype O:6 (strain 81116 / NCTC 11828).